The sequence spans 344 residues: Hydrophobic dipeptide epimerase (344 aa).

Substrate contacts are provided by residues Thr126 and Lys151 to Lys153. Asp184, Glu210, and Asp235 together coordinate Mg(2+). Substrate contacts are provided by residues Lys257 and Asp307–Asp309.

Belongs to the mandelate racemase/muconate lactonizing enzyme family. Requires Mg(2+) as cofactor.

Dipeptide epimerase with a preference for hydrophobic substrates. Catalyzes the epimerization of L-Ala-L-Thr, L-Ala-L-Met, L-Ala-L-His, L-Ala-L-Phe, L-Ala-L-Tyr, L-Ala-L-Trp, L-Ile-L-Ala, L-Ile-L-Ser, L-Ile-L-Met, L-Ile-L-His, L-Ile-L-Phe, L-Ile-L-Tyr, L-Ile-L-Trp, L-Phe-L-Met, L-Phe-L-His, L-Phe-L-Phe, L-Phe-L-Tyr, L-Phe-L-Trp, L-Phe-L-Ser, L-Phe-L-Thr and L-Phe-L-Lys (in vitro). This Roseobacter litoralis (strain ATCC 49566 / DSM 6996 / JCM 21268 / NBRC 15278 / OCh 149) protein is Hydrophobic dipeptide epimerase.